Here is a 62-residue protein sequence, read N- to C-terminus: Large ribosomal subunit protein bL28 (62 aa).

Belongs to the bacterial ribosomal protein bL28 family.

The protein is Large ribosomal subunit protein bL28 of Onion yellows phytoplasma (strain OY-M).